The following is a 148-amino-acid chain: MKLDLKILDARMRDYLPKYATTGSAGLDLRACLDAPVTLKPGDTALVPTGLAIHLADPGYAALILPRSGLGHKHGIVLGNLVGLIDSDYQGELMISTWNRGQTEFVLNPFERLAQLVIVPVVQATFNIVGDFAQSDRGAGGFGSTGRH.

Substrate-binding positions include 67-69, Asn80, 84-86, and Met94; these read RSG and LID.

The protein belongs to the dUTPase family. It depends on Mg(2+) as a cofactor.

It catalyses the reaction dUTP + H2O = dUMP + diphosphate + H(+). The protein operates within pyrimidine metabolism; dUMP biosynthesis; dUMP from dCTP (dUTP route): step 2/2. In terms of biological role, this enzyme is involved in nucleotide metabolism: it produces dUMP, the immediate precursor of thymidine nucleotides and it decreases the intracellular concentration of dUTP so that uracil cannot be incorporated into DNA. The chain is Deoxyuridine 5'-triphosphate nucleotidohydrolase from Burkholderia thailandensis (strain ATCC 700388 / DSM 13276 / CCUG 48851 / CIP 106301 / E264).